Here is a 350-residue protein sequence, read N- to C-terminus: MPVLHNRISNDELKAKMLAESEPRTTISFYKYFTIASPQQTRDALYQVFTALDVFGRVYLAHEGINAQISVPQSKVETFRQQLYTFDPALDGLRLNIALEDDGKSFWVLRMKVRDRIVADGIDDPTFDASNVGDYLKAADVNAMLDDPDAVFIDMRNHYEYEVGHFENALEIPADTFREQLPKAVEMLREHADKKIVMYCTGGIRCEKASAWMKHNGFNKVWHIEGGIIEYARRAREQGLPVRFIGKNFVFDERMGERISDEVIAHCHQCGAPCDSHTNCKNDGCHLLFIQCPKCASKFNGCCSEQCCEELALPEEEQRRRRAGRENGNKIFNKSRGRLNSKLSIPDPAE.

Residues 146–240 (DDPDAVFIDM…YARRAREQGL (95 aa)) form the Rhodanese domain. Cysteine 200 functions as the Cysteine persulfide intermediate in the catalytic mechanism. A compositionally biased stretch (basic and acidic residues) spans 319 to 328 (RRRRAGRENG). A disordered region spans residues 319–350 (RRRRAGRENGNKIFNKSRGRLNSKLSIPDPAE).

This sequence belongs to the TrhO family.

The catalysed reaction is uridine(34) in tRNA + AH2 + O2 = 5-hydroxyuridine(34) in tRNA + A + H2O. Its function is as follows. Catalyzes oxygen-dependent 5-hydroxyuridine (ho5U) modification at position 34 in tRNAs. The sequence is that of tRNA uridine(34) hydroxylase from Salmonella gallinarum (strain 287/91 / NCTC 13346).